The chain runs to 1072 residues: Teashirt homolog 3 (1072 aa).

Disordered stretches follow at residues Ala44 to Ser71, Pro130 to Gly153, and His228 to Pro247. The segment covering Ser57 to Ser71 has biased composition (basic and acidic residues). 2 consecutive C2H2-type zinc fingers follow at residues Phe204–His228 and Leu265–His289. Over residues His228–Asp237 the composition is skewed to basic and acidic residues. The segment at Ser315–Ser336 is disordered. Residues Leu376 to His400 form a C2H2-type 3; atypical zinc finger. Over residues Ala469–Ala481 the composition is skewed to basic and acidic residues. 5 disordered regions span residues Ala469 to Asp489, Asn569 to Lys594, Glu616 to Gly690, Thr784 to Thr815, and Thr846 to Asn888. Polar residues-rich tracts occupy residues Glu571–Pro593 and Ser649–Ser660. Ser672 carries the phosphoserine modification. Composition is skewed to low complexity over residues Gly791 to Thr815 and Glu847 to Ser860. Residues Arg882–Gly952 constitute a DNA-binding region (homeobox; atypical). 2 consecutive C2H2-type zinc fingers follow at residues Phe967–His989 and Tyr1032–His1055.

Belongs to the teashirt C2H2-type zinc-finger protein family. Interacts (via N-terminus) with HDAC1 and HDAC2; the interaction is direct. Found in a trimeric complex with APBB1 and HDAC1; the interaction between HDAC1 and APBB1 is mediated by TSHZ3. Interacts (via homeobox domain) with APBB1 (via PID domain 1). Expressed in cortical neurons.

Its subcellular location is the nucleus. The protein resides in the cell projection. The protein localises to the growth cone. In terms of biological role, transcriptional regulator involved in developmental processes. Functions in association with APBB1, SET and HDAC factors as a transcriptional repressor, that inhibits the expression of CASP4. TSHZ3-mediated transcription repression involves the recruitment of histone deacetylases HDAC1 and HDAC2. Associates with chromatin in a region surrounding the CASP4 transcriptional start site(s). Regulates the development of neurons involved in both respiratory rhythm and airflow control. Promotes maintenance of nucleus ambiguus (nA) motoneurons, which govern upper airway function, and establishes a respiratory rhythm generator (RRG) activity compatible with survival at birth. Involved in the differentiation of the proximal uretic smooth muscle cells during developmental processes. Involved in the up-regulation of myocardin, that directs the expression of smooth muscle cells in the proximal ureter. Involved in the modulation of glutamatergic synaptic transmission and long-term synaptic potentiation. This is Teashirt homolog 3 (Tshz3) from Rattus norvegicus (Rat).